The primary structure comprises 426 residues: DNA polymerase processivity factor component OPG148 (426 aa).

It belongs to the orthopoxvirus OPG148 family. In terms of assembly, interacts with the DNA polymerase catalytic subunit OPG071. Interacts with UDG/OPG116. Component of the uracil-DNA glycosylase(UDG)-OPG148-polymerase complex; OPG148 and UDG form a heterodimeric processivity factor that associates with OPG071 to form the processive polymerase holoenzyme. Interacts with OPG117.

Functionally, plays an essential role in viral DNA replication by acting as the polymerase processivity factor together with protein OPG116. Serves as a bridge which links the DNA polymerase OPG071 and the uracil DNA glycosylase. In Cynomys gunnisoni (Gunnison's prairie dog), this protein is DNA polymerase processivity factor component OPG148 (OPG148).